Here is a 321-residue protein sequence, read N- to C-terminus: NADH-ubiquinone oxidoreductase chain 1 (321 aa).

Transmembrane regions (helical) follow at residues 9–29 (ITNS…LTLL), 75–95 (ILFT…WAPM), 106–126 (LGLL…LWSG), 151–171 (TLGL…LMLF), 177–197 (HMWL…STLA), 219–239 (VEFS…NILF), 256–276 (PQLF…LFLW), and 297–317 (YLPL…ALCG).

Belongs to the complex I subunit 1 family.

It is found in the mitochondrion inner membrane. It carries out the reaction a ubiquinone + NADH + 5 H(+)(in) = a ubiquinol + NAD(+) + 4 H(+)(out). Its function is as follows. Core subunit of the mitochondrial membrane respiratory chain NADH dehydrogenase (Complex I) that is believed to belong to the minimal assembly required for catalysis. Complex I functions in the transfer of electrons from NADH to the respiratory chain. The immediate electron acceptor for the enzyme is believed to be ubiquinone. The protein is NADH-ubiquinone oxidoreductase chain 1 (MT-ND1) of Lycodon semicarinatus (Ryukyu odd-tooth snake).